A 317-amino-acid chain; its full sequence is Metaxin-1 (317 aa).

Residues lysine 38, lysine 41, lysine 78, and lysine 168 each participate in a glycyl lysine isopeptide (Lys-Gly) (interchain with G-Cter in ubiquitin) cross-link. A helical transmembrane segment spans residues 272 to 292 (ILSVLAGLAAMVGYALLSGIV).

The protein belongs to the metaxin family. Interacts with MTX2/metaxin-2. Associates with the mitochondrial contact site and cristae organizing system (MICOS) complex, composed of at least MICOS10/MIC10, CHCHD3/MIC19, CHCHD6/MIC25, APOOL/MIC27, IMMT/MIC60, APOO/MIC23/MIC26 and QIL1/MIC13. This complex was also known under the names MINOS or MitOS complex. The MICOS complex associates with mitochondrial outer membrane proteins SAMM50, MTX1 and MTX2 (together described as components of the mitochondrial outer membrane sorting assembly machinery (SAM) complex) and DNAJC11, mitochondrial inner membrane protein TMEM11 and with HSPA9. The MICOS and SAM complexes together with DNAJC11 are part of a large protein complex spanning both membranes termed the mitochondrial intermembrane space bridging (MIB) complex. Interacts with ARMC1. Post-translationally, ubiquitinated by PRKN during mitophagy, leading to its degradation and enhancement of mitophagy. Deubiquitinated by USP30. Ubiquitous. Higher levels are seen in the kidney as compared to other tissues.

Its subcellular location is the mitochondrion outer membrane. Involved in transport of proteins into the mitochondrion. Essential for embryonic development. The chain is Metaxin-1 (Mtx1) from Mus musculus (Mouse).